A 315-amino-acid chain; its full sequence is Holliday junction branch migration complex subunit RuvB (315 aa).

The large ATPase domain (RuvB-L) stretch occupies residues 1-168 (MAKKQEIRPK…FGLIGQISNY (168 aa)). ATP contacts are provided by residues Ile7, Arg8, Gly49, Lys52, Thr53, Ser54, 115-117 (EDF), Arg158, Tyr168, and Arg205. Mg(2+) is bound at residue Thr53. The small ATPAse domain (RuvB-S) stretch occupies residues 169–239 (QVEDIEKIIK…LVNKTLKQLG (71 aa)). The head domain (RuvB-H) stretch occupies residues 242–315 (ENGLNESQVK…QKGISYLERI (74 aa)). DNA contacts are provided by Lys297 and Arg302.

It belongs to the RuvB family. Homohexamer. Forms an RuvA(8)-RuvB(12)-Holliday junction (HJ) complex. HJ DNA is sandwiched between 2 RuvA tetramers; dsDNA enters through RuvA and exits via RuvB. An RuvB hexamer assembles on each DNA strand where it exits the tetramer. Each RuvB hexamer is contacted by two RuvA subunits (via domain III) on 2 adjacent RuvB subunits; this complex drives branch migration. In the full resolvosome a probable DNA-RuvA(4)-RuvB(12)-RuvC(2) complex forms which resolves the HJ.

It localises to the cytoplasm. The enzyme catalyses ATP + H2O = ADP + phosphate + H(+). In terms of biological role, the RuvA-RuvB-RuvC complex processes Holliday junction (HJ) DNA during genetic recombination and DNA repair, while the RuvA-RuvB complex plays an important role in the rescue of blocked DNA replication forks via replication fork reversal (RFR). RuvA specifically binds to HJ cruciform DNA, conferring on it an open structure. The RuvB hexamer acts as an ATP-dependent pump, pulling dsDNA into and through the RuvAB complex. RuvB forms 2 homohexamers on either side of HJ DNA bound by 1 or 2 RuvA tetramers; 4 subunits per hexamer contact DNA at a time. Coordinated motions by a converter formed by DNA-disengaged RuvB subunits stimulates ATP hydrolysis and nucleotide exchange. Immobilization of the converter enables RuvB to convert the ATP-contained energy into a lever motion, pulling 2 nucleotides of DNA out of the RuvA tetramer per ATP hydrolyzed, thus driving DNA branch migration. The RuvB motors rotate together with the DNA substrate, which together with the progressing nucleotide cycle form the mechanistic basis for DNA recombination by continuous HJ branch migration. Branch migration allows RuvC to scan DNA until it finds its consensus sequence, where it cleaves and resolves cruciform DNA. The protein is Holliday junction branch migration complex subunit RuvB of Mycoplasmopsis pulmonis (strain UAB CTIP) (Mycoplasma pulmonis).